Reading from the N-terminus, the 589-residue chain is Progranulin (589 aa).

The first 17 residues, 1–17, serve as a signal peptide directing secretion; the sequence is MWVLMSWLAFAAGLVAG. A glycan (N-linked (GlcNAc...) asparagine) is linked at asparagine 38. 2 cysteine pairs are disulfide-bonded: cysteine 125–cysteine 138 and cysteine 132–cysteine 148. N-linked (GlcNAc...) asparagine glycosylation occurs at asparagine 263. 10 disulfide bridges follow: cysteine 282–cysteine 294, cysteine 288–cysteine 304, cysteine 295–cysteine 312, cysteine 305–cysteine 319, cysteine 313–cysteine 326, cysteine 320–cysteine 333, cysteine 364–cysteine 376, cysteine 370–cysteine 386, cysteine 395–cysteine 408, and cysteine 402–cysteine 414. The N-linked (GlcNAc...) asparagine glycan is linked to asparagine 373. A glycan (N-linked (GlcNAc...) asparagine) is linked at asparagine 526.

It belongs to the granulin family. Progranulin is secreted as a homodimer. Interacts with SLPI; interaction protects progranulin from proteolysis. Interacts (via region corresponding to granulin-7 peptide) with CTSD; stabilizes CTSD and increases its proteolytic activity. Interacts (via region corresponding to granulin-7 peptide) with SORT1; this interaction mediates endocytosis and lysosome delivery of progranulin; interaction occurs at the neuronal cell surface in a stressed nervous system. Interacts with PSAP; facilitates lysosomal delivery of progranulin from the extracellular space and the biosynthetic pathway. Forms a complex with PSAP and M6PR; PSAP bridges the binding between progranulin and M6PR. Forms a complex with PSAP and SORT1; progranulin bridges the interaction between PSAP and SORT1; facilitates lysosomal targeting of PSAP via SORT1; interaction enhances PSAP uptake in primary cortical neurons. Interacts (via regions corresponding to granulin-2 and granulin-7 peptides) with GBA1; this interaction prevents aggregation of GBA1-SCARB2 complex via interaction with HSPA1A upon stress. Interacts (via region corresponding to granulin-7 peptide) with HSPA1A; mediates recruitment of HSPA1A to GBA1 and prevents GBA1 aggregation in response to stress. N-glycosylated. In terms of processing, cleaved by ELANE; proteolysis is blocked by SLPI and is concentration- and time-dependent and induces CXCL8/IL-8 production; granulin-3 and granulin-4 are resistant to ELANE. Cleaved by CTSL in lysosome thus regulating the maturation and turnover of progranulin within the lysosome. In terms of tissue distribution, highly expressed at the wound site and diminishes away from the wound. Not expressed in fibroblasts and endothelial cells in intact skin. In adult brain, expressed primarily in neurons and in resting and reactive microglia. Expressed in both neurons and microglia. Highly expressed in activated microglia in response to injury. Expressed in macrophage.

It is found in the secreted. The protein localises to the lysosome. Functionally, secreted protein that acts as a key regulator of lysosomal function and as a growth factor involved in inflammation, wound healing and cell proliferation. Regulates protein trafficking to lysosomes, and also the activity of lysosomal enzymes. Also facilitates the acidification of lysosomes, causing degradation of mature CTSD by CTSB. In addition, functions as a wound-related growth factor that acts directly on dermal fibroblasts and endothelial cells to promote division, migration and the formation of capillary-like tubule structures. Also promotes epithelial cell proliferation by blocking TNF-mediated neutrophil activation preventing release of oxidants and proteases. Moreover, modulates inflammation in neurons by preserving neurons survival, axonal outgrowth and neuronal integrity. Its function is as follows. Inhibits epithelial cell proliferation and induces epithelial cells to secrete IL-8. Stabilizes CTSD through interaction with CTSD leading to maintain its aspartic-type peptidase activity. This Mus musculus (Mouse) protein is Progranulin (Grn).